The chain runs to 93 residues: Mitochondrial import inner membrane translocase subunit TIM9 (93 aa).

The Twin CX3C motif signature appears at 43–67; it reads CFVDCVDSFTRKSLQKQEETCVMRC. 2 disulfides stabilise this stretch: cysteine 43-cysteine 67 and cysteine 47-cysteine 63.

The protein belongs to the small Tim family. In terms of assembly, heterohexamer; composed of 3 copies of TIM9 and 3 copies of TIM10, named soluble 70 kDa complex. The complex associates with the TIM22 component of the TIM22 complex. Interacts with multi-pass transmembrane proteins in transit. Expressed in roots, flowers, young cotyledons and leaves.

The protein resides in the mitochondrion intermembrane space. Mitochondrial intermembrane chaperone that participates in the import and insertion of multi-pass transmembrane proteins into the mitochondrial inner membrane. May also be required for the transfer of beta-barrel precursors from the TOM complex to the sorting and assembly machinery (SAM complex) of the outer membrane. Acts as a chaperone-like protein that protects the hydrophobic precursors from aggregation and guide them through the mitochondrial intermembrane space. The sequence is that of Mitochondrial import inner membrane translocase subunit TIM9 (TIM9) from Arabidopsis thaliana (Mouse-ear cress).